A 645-amino-acid chain; its full sequence is Protein disulfide-isomerase A4 (645 aa).

The N-terminal stretch at 1 to 20 (MRPRKAFLLLLLLGLVQLLA) is a signal peptide. Thioredoxin domains are found at residues 21–169 (VAGA…EVSQ) and 158–301 (EEIV…EFLK). Residues 24 to 58 (AEGPDEDSSNRENAIEDEEEEEEEDDDEEEDDLEV) form a disordered region. The segment covering 38–58 (IEDEEEEEEEDDDEEEDDLEV) has biased composition (acidic residues). The CXXC signature appears at 91–94 (CGHC). Cystine bridges form between C91–C94 and C206–C209. At K366 the chain carries N6-acetyllysine. The region spanning 505–636 (FKKGKLKPVI…LSKFIEEHAT (132 aa)) is the Thioredoxin 3 domain. Positions 555 to 558 (CGHC) match the CXXC motif. C555 and C558 are joined by a disulfide. The Prevents secretion from ER motif lies at 642-645 (KEEL).

The protein belongs to the protein disulfide isomerase family. As to quaternary structure, part of a large chaperone multiprotein complex comprising DNAJB11, HSP90B1, HSPA5, HYOU, PDIA2, PDIA4, PDIA6, PPIB, SDF2L1, UGGT1 and very small amounts of ERP29, but not, or at very low levels, CALR nor CANX. Component of a complex containing at least CRELD2, MANF, MATN3 and PDIA4. In terms of assembly, (Microbial infection) Interacts with Human astrovirus-1 and Human astrovirus-8 spike protein VP25; this interaction seems to facilitate the uncoating during virus entry into the cell. Does not interact with Human astrovirus-2 spike protein VP25.

The protein resides in the endoplasmic reticulum lumen. Its subcellular location is the melanosome. It catalyses the reaction Catalyzes the rearrangement of -S-S- bonds in proteins.. The polypeptide is Protein disulfide-isomerase A4 (PDIA4) (Homo sapiens (Human)).